A 448-amino-acid polypeptide reads, in one-letter code: Fumarate hydratase class II (448 aa).

Residues 83-85, 113-116, 123-125, and Thr-171 contribute to the substrate site; these read SGT, HPND, and SSN. The active-site Proton donor/acceptor is the His-172. Residue Ser-302 is part of the active site. Substrate-binding positions include Ser-303 and 308-310; that span reads KVN.

It belongs to the class-II fumarase/aspartase family. Fumarase subfamily. In terms of assembly, homotetramer.

The protein localises to the cytoplasm. The enzyme catalyses (S)-malate = fumarate + H2O. Its pathway is carbohydrate metabolism; tricarboxylic acid cycle; (S)-malate from fumarate: step 1/1. Its function is as follows. Involved in the TCA cycle. Catalyzes the stereospecific interconversion of fumarate to L-malate. The sequence is that of Fumarate hydratase class II from Blochmanniella floridana.